The following is a 127-amino-acid chain: MTSVNKQLLKDVMRVDLERQQHQFLRRTYGPQHRLTTQQALTVMRVAAREQTRYSQRTTQCVAAHLLEQRAAVQQELQRARQLQSGNVDDALDSLTELKDTVDDVRATLVDSVSATCDLDLEVDDAV.

This sequence belongs to the herpesviridae UL96 family.

The protein localises to the virion. The protein is Protein UL96 (UL96) of Homo sapiens (Human).